A 266-amino-acid polypeptide reads, in one-letter code: Glucosamine-6-phosphate deaminase (266 aa).

The Proton acceptor; for enolization step role is filled by D72. D141 (for ring-opening step) is an active-site residue. The active-site Proton acceptor; for ring-opening step is the H143. The active-site For ring-opening step is the E148.

It belongs to the glucosamine/galactosamine-6-phosphate isomerase family. NagB subfamily. Homohexamer.

The enzyme catalyses alpha-D-glucosamine 6-phosphate + H2O = beta-D-fructose 6-phosphate + NH4(+). The protein operates within amino-sugar metabolism; N-acetylneuraminate degradation; D-fructose 6-phosphate from N-acetylneuraminate: step 5/5. Allosterically activated by N-acetylglucosamine 6-phosphate (GlcNAc6P). Functionally, catalyzes the reversible isomerization-deamination of glucosamine 6-phosphate (GlcN6P) to form fructose 6-phosphate (Fru6P) and ammonium ion. In Cronobacter sakazakii (strain ATCC BAA-894) (Enterobacter sakazakii), this protein is Glucosamine-6-phosphate deaminase.